A 404-amino-acid chain; its full sequence is O-antigen ligase (404 aa).

11 helical membrane passes run 16 to 32 (IWNK…YFLD), 39 to 55 (HLII…QVSR), 67 to 84 (SVFY…YSIL), 96 to 115 (FENT…PVLL), 127 to 147 (VLFS…ILYI), 168 to 183 (SMVF…WLFR), 189 to 221 (LVFL…GVLW), 228 to 246 (WKLI…ALVI), 324 to 343 (ILYI…VYLY), 363 to 379 (YNAH…FYIV), and 385 to 401 (QVDI…LLAL).

Belongs to the O-antigen ligase family.

It is found in the cell inner membrane. The catalysed reaction is a lipid-linked O antigen + a lipid A-core oligosaccharide = a lipopolysaccharide + a polyisoprenyl diphosphate.. Its pathway is bacterial outer membrane biogenesis; lipopolysaccharide biosynthesis. In terms of biological role, transferase involved in the biosynthesis of the lipopolysaccharide (LPS). Catalyzes the transfer of a polymerized O-antigen molecule from its polyprenyl diphosphate membrane anchor to a terminal sugar of the lipid A-core oligosaccharide, finalizing the biosynthesis of the lipopolysaccharide. May also be involved in a feedback mechanism to regulate O-unit synthesis, based on the availability of O units on the periplasmic face of the membrane. This Salmonella typhimurium (strain LT2 / SGSC1412 / ATCC 700720) protein is O-antigen ligase.